A 368-amino-acid chain; its full sequence is Homoserine O-acetyltransferase (368 aa).

The region spanning 43–346 is the AB hydrolase-1 domain; it reads ILLEHALTGT…EYGHDAFLVE (304 aa). S145 serves as the catalytic Nucleophile. R212 is a substrate binding site. Active-site residues include D307 and H340. D341 contributes to the substrate binding site.

The protein belongs to the AB hydrolase superfamily. MetX family. In terms of assembly, homodimer.

Its subcellular location is the cytoplasm. The enzyme catalyses L-homoserine + acetyl-CoA = O-acetyl-L-homoserine + CoA. It functions in the pathway amino-acid biosynthesis; L-methionine biosynthesis via de novo pathway; O-acetyl-L-homoserine from L-homoserine: step 1/1. Transfers an acetyl group from acetyl-CoA to L-homoserine, forming acetyl-L-homoserine. The chain is Homoserine O-acetyltransferase from Listeria monocytogenes serovar 1/2a (strain ATCC BAA-679 / EGD-e).